Reading from the N-terminus, the 252-residue chain is Thiamine thiazole synthase (252 aa).

NAD(+) contacts are provided by residues S35, 54-55 (EK), G62, V126, and 152-154 (HVD). Fe cation-binding residues include D154 and H169. An NAD(+)-binding site is contributed by M217. A glycine-binding site is contributed by R227.

Belongs to the THI4 family. As to quaternary structure, homooctamer; tetramer of dimers. Fe(2+) is required as a cofactor.

The catalysed reaction is hydrogen sulfide + glycine + NAD(+) = ADP-5-ethyl-4-methylthiazole-2-carboxylate + nicotinamide + 3 H2O + H(+). It functions in the pathway cofactor biosynthesis; thiamine diphosphate biosynthesis. Involved in the biosynthesis of the thiazole moiety of thiamine. Catalyzes the conversion of NAD and glycine to adenosine diphosphate 5-(2-hydroxyethyl)-4-methylthiazole-2-carboxylate (ADT), an adenylated thiazole intermediate, using free sulfide as a source of sulfur. The chain is Thiamine thiazole synthase from Pyrococcus abyssi (strain GE5 / Orsay).